We begin with the raw amino-acid sequence, 562 residues long: Tetratricopeptide repeat protein 34 (562 aa).

A disordered region spans residues Met1 to Glu30. Residues Lys19–Glu30 are compositionally biased toward basic and acidic residues. TPR repeat units follow at residues Asp51–Arg84, Lys175–Asn208, Glu210–Tyr242, Ala304–Asp337, Phe388–Asn421, Lys423–His455, Ala461–Ser494, and Ala509–Asn542.

This Xenopus laevis (African clawed frog) protein is Tetratricopeptide repeat protein 34 (ttc34).